We begin with the raw amino-acid sequence, 201 residues long: 3-isopropylmalate dehydratase small subunit (201 aa).

It belongs to the LeuD family. LeuD type 1 subfamily. In terms of assembly, heterodimer of LeuC and LeuD.

The catalysed reaction is (2R,3S)-3-isopropylmalate = (2S)-2-isopropylmalate. It participates in amino-acid biosynthesis; L-leucine biosynthesis; L-leucine from 3-methyl-2-oxobutanoate: step 2/4. Catalyzes the isomerization between 2-isopropylmalate and 3-isopropylmalate, via the formation of 2-isopropylmaleate. The protein is 3-isopropylmalate dehydratase small subunit of Rhizobium meliloti (strain 1021) (Ensifer meliloti).